The chain runs to 23 residues: PAWLVDCPCVGDDVNFILTRGQK.

A propeptide is located at residue P1. Residues 2–8 (AWLVDCP) constitute a cross-link (cyclopeptide (Ala-Pro)). A cross-link (2'-cysteinyl-6'-hydroxytryptophan sulfoxide (Trp-Cys)) is located at residues 3–7 (WLVDC). Positions 9–23 (CVGDDVNFILTRGQK) are excised as a propeptide.

The protein belongs to the MSDIN fungal toxin family. In terms of processing, processed by the macrocyclase-peptidase enzyme POPB to yield a toxic cyclic heptapeptide. POPB first removes 10 residues from the N-terminus. Conformational trapping of the remaining peptide forces the enzyme to release this intermediate rather than proceed to macrocyclization. The enzyme rebinds the remaining peptide in a different conformation and catalyzes macrocyclization of the N-terminal 7 residues.

Functionally, major toxin that belongs to the bicyclic heptapeptides called phallotoxins. Although structurally related to amatoxins, phallotoxins have a different mode of action, which is the stabilization of F-actin. Phallotoxins are poisonous when administered parenterally, but not orally because of poor absorption. The chain is Phallacidin proprotein from Amanita fuligineoides.